The chain runs to 307 residues: Acetaldehyde dehydrogenase (307 aa).

Position 12-15 (12-15 (SGNI)) interacts with NAD(+). The active-site Acyl-thioester intermediate is the Cys130. NAD(+)-binding positions include 161–169 (SVGPGTRQN) and Asn272.

Belongs to the acetaldehyde dehydrogenase family.

It catalyses the reaction acetaldehyde + NAD(+) + CoA = acetyl-CoA + NADH + H(+). This Shewanella halifaxensis (strain HAW-EB4) protein is Acetaldehyde dehydrogenase.